A 197-amino-acid polypeptide reads, in one-letter code: FMN-dependent NADH:quinone oxidoreductase (197 aa).

Ser-10 contacts FMN.

It belongs to the azoreductase type 1 family. As to quaternary structure, homodimer. FMN serves as cofactor.

It catalyses the reaction 2 a quinone + NADH + H(+) = 2 a 1,4-benzosemiquinone + NAD(+). The enzyme catalyses N,N-dimethyl-1,4-phenylenediamine + anthranilate + 2 NAD(+) = 2-(4-dimethylaminophenyl)diazenylbenzoate + 2 NADH + 2 H(+). In terms of biological role, quinone reductase that provides resistance to thiol-specific stress caused by electrophilic quinones. Its function is as follows. Also exhibits azoreductase activity. Catalyzes the reductive cleavage of the azo bond in aromatic azo compounds to the corresponding amines. This chain is FMN-dependent NADH:quinone oxidoreductase, found in Mycoplasma genitalium (strain ATCC 33530 / DSM 19775 / NCTC 10195 / G37) (Mycoplasmoides genitalium).